The chain runs to 478 residues: Ankyrin repeat and BTB/POZ domain-containing protein 1 (478 aa).

ANK repeat units lie at residues 1 to 31 (MDTS…EVNV) and 35 to 64 (WDST…RCEA). BTB domains follow at residues 115-182 (SDVV…DIGV) and 272-346 (PDIC…ELSP). Residues 451–477 (VQTYSAIEEAQQRLRALEDLLVSIGLD) are a coiled coil.

As to expression, ubiquitously expressed in all fetal tissues examined including heart, brain, liver, and kidney. Also expressed at lower levels in both adult heart and hypertrophic heart.

It localises to the cytoplasm. May act as a mediator of the PTEN growth-suppressive signaling pathway. May play a role in developmental processes. This is Ankyrin repeat and BTB/POZ domain-containing protein 1 from Homo sapiens (Human).